Consider the following 309-residue polypeptide: Lipoyl synthase (309 aa).

[4Fe-4S] cluster is bound by residues Cys43, Cys48, Cys54, Cys70, Cys74, Cys77, and Ser283. The Radical SAM core domain maps to 56 to 272 (AVRKTATFMI…KEIAMQKGFS (217 aa)).

The protein belongs to the radical SAM superfamily. Lipoyl synthase family. [4Fe-4S] cluster serves as cofactor.

It localises to the cytoplasm. It catalyses the reaction [[Fe-S] cluster scaffold protein carrying a second [4Fe-4S](2+) cluster] + N(6)-octanoyl-L-lysyl-[protein] + 2 oxidized [2Fe-2S]-[ferredoxin] + 2 S-adenosyl-L-methionine + 4 H(+) = [[Fe-S] cluster scaffold protein] + N(6)-[(R)-dihydrolipoyl]-L-lysyl-[protein] + 4 Fe(3+) + 2 hydrogen sulfide + 2 5'-deoxyadenosine + 2 L-methionine + 2 reduced [2Fe-2S]-[ferredoxin]. It functions in the pathway protein modification; protein lipoylation via endogenous pathway; protein N(6)-(lipoyl)lysine from octanoyl-[acyl-carrier-protein]. Its function is as follows. Catalyzes the radical-mediated insertion of two sulfur atoms into the C-6 and C-8 positions of the octanoyl moiety bound to the lipoyl domains of lipoate-dependent enzymes, thereby converting the octanoylated domains into lipoylated derivatives. This Shouchella clausii (strain KSM-K16) (Alkalihalobacillus clausii) protein is Lipoyl synthase.